Reading from the N-terminus, the 600-residue chain is DNA mismatch repair protein MutL (600 aa).

This sequence belongs to the DNA mismatch repair MutL/HexB family.

This protein is involved in the repair of mismatches in DNA. It is required for dam-dependent methyl-directed DNA mismatch repair. May act as a 'molecular matchmaker', a protein that promotes the formation of a stable complex between two or more DNA-binding proteins in an ATP-dependent manner without itself being part of a final effector complex. The sequence is that of DNA mismatch repair protein MutL from Rickettsia typhi (strain ATCC VR-144 / Wilmington).